Here is a 360-residue protein sequence, read N- to C-terminus: S-adenosylmethionine:tRNA ribosyltransferase-isomerase (360 aa).

The protein belongs to the QueA family. Monomer.

The protein localises to the cytoplasm. The catalysed reaction is 7-aminomethyl-7-carbaguanosine(34) in tRNA + S-adenosyl-L-methionine = epoxyqueuosine(34) in tRNA + adenine + L-methionine + 2 H(+). The protein operates within tRNA modification; tRNA-queuosine biosynthesis. In terms of biological role, transfers and isomerizes the ribose moiety from AdoMet to the 7-aminomethyl group of 7-deazaguanine (preQ1-tRNA) to give epoxyqueuosine (oQ-tRNA). This chain is S-adenosylmethionine:tRNA ribosyltransferase-isomerase, found in Sinorhizobium medicae (strain WSM419) (Ensifer medicae).